A 423-amino-acid polypeptide reads, in one-letter code: MRFLRRQTRRLRSIWQRSLPVRFRRGKLHTQLVTICLYATVFLNILYGVYLGRFSFRRKKFVFSKGLTIYSLFVATFFALFYIWNIYNEISTGQINLRDTIGIYCYMNVCVCLFNYVTQWEKTLQIIRFQNSVPLFKVLDSLDISAMIVWRAFIYGLLKIVFCPLITYITLILYHRRSISESQWTSVTTTKTMLPLIVSNQINNCFFGGLVLANLIFAAVNRKLHGIVKEANMLQSPVQMNLHKPYYRMRRFCELADLLDELARKYGFTASRSKNYLRFTDWSMVLSMLMNLLGITMGCYNQYLAIADHYINEEPFDLFLAIVLVVFLAVPFLELVMVARISNQTLTRRTGELLQRFDLQHADARFKQVVNAFWLQVVTINYKLMPLGLLELNTSLVNKVFSSAIGSLLILIQSDLTLRFSLK.

The Cytoplasmic portion of the chain corresponds to 1 to 31 (MRFLRRQTRRLRSIWQRSLPVRFRRGKLHTQ). The helical transmembrane segment at 32–52 (LVTICLYATVFLNILYGVYLG) threads the bilayer. Residues 53–65 (RFSFRRKKFVFSK) are Extracellular-facing. A helical transmembrane segment spans residues 66–86 (GLTIYSLFVATFFALFYIWNI). The Cytoplasmic portion of the chain corresponds to 87-99 (YNEISTGQINLRD). Residues 100-120 (TIGIYCYMNVCVCLFNYVTQW) traverse the membrane as a helical segment. Residues 121 to 152 (EKTLQIIRFQNSVPLFKVLDSLDISAMIVWRA) lie on the Extracellular side of the membrane. The chain crosses the membrane as a helical span at residues 153 to 173 (FIYGLLKIVFCPLITYITLIL). Residues 174–200 (YHRRSISESQWTSVTTTKTMLPLIVSN) lie on the Cytoplasmic side of the membrane. The chain crosses the membrane as a helical span at residues 201–221 (QINNCFFGGLVLANLIFAAVN). Over 222–278 (RKLHGIVKEANMLQSPVQMNLHKPYYRMRRFCELADLLDELARKYGFTASRSKNYLR) the chain is Extracellular. A helical transmembrane segment spans residues 279–299 (FTDWSMVLSMLMNLLGITMGC). The Cytoplasmic segment spans residues 300 to 317 (YNQYLAIADHYINEEPFD). The helical transmembrane segment at 318–338 (LFLAIVLVVFLAVPFLELVMV) threads the bilayer. The Extracellular portion of the chain corresponds to 339–423 (ARISNQTLTR…SDLTLRFSLK (85 aa)). N-linked (GlcNAc...) asparagine glycans are attached at residues asparagine 343 and asparagine 393.

This sequence belongs to the insect chemoreceptor superfamily. Gustatory receptor (GR) family. Gr22e subfamily. As to expression, in larvae, is expressed in neurons of the terminal external chemosensory organ.

Its subcellular location is the cell membrane. Functionally, probable gustatory receptor which mediates acceptance or avoidance behavior, depending on its substrates. The protein is Putative gustatory receptor 97a (Gr97a) of Drosophila melanogaster (Fruit fly).